The following is a 315-amino-acid chain: Olfactory receptor 5P59 (315 aa).

The Extracellular portion of the chain corresponds to 1-28 (MAFLQDGNHTAVTEFILLGLTDDPVLRV). Asn-8 is a glycosylation site (N-linked (GlcNAc...) asparagine). Residues 29–49 (VLFTIILCIYLVTVFGNLSTI) traverse the membrane as a helical segment. Residues 50–57 (LLIRVSSQ) are Cytoplasmic-facing. The chain crosses the membrane as a helical span at residues 58-78 (LHHPMYFFLSHLASVDIGISS). Residues 79–102 (SVTPSMLVNFLLERSTISYLGCGI) are Extracellular-facing. Cys-100 and Cys-193 are oxidised to a cystine. Residues 103–123 (QLGSADFIASVECFLLAAMAY) traverse the membrane as a helical segment. Topologically, residues 124–136 (DRFMAVCNPLLYS) are cytoplasmic. A helical transmembrane segment spans residues 137-157 (TKMSTQVCVQLVVGSYIGGFL). At 158–200 (NASLIVTVYFFSFLFCGPNRIDHFFCDFAPLAELSCSDVSVSV) the chain is on the extracellular side. Residues 201-221 (LIISFSAGSVTMITVFVIVIS) traverse the membrane as a helical segment. Residues 222–241 (YSYILITILKMHSTEGRHKA) lie on the Cytoplasmic side of the membrane. The helical transmembrane segment at 242–262 (FSTCTSHLTAVTLYYGTITFI) threads the bilayer. At 263–275 (YVMPKSSFSTDQN) the chain is on the extracellular side. Residues 276–296 (KVVSVFYMVMIPMLNPLIYSL) form a helical membrane-spanning segment. At 297 to 315 (SNNEIKGALKRQLGMKTLS) the chain is on the cytoplasmic side.

This sequence belongs to the G-protein coupled receptor 1 family.

Its subcellular location is the cell membrane. Functionally, potential odorant receptor. The polypeptide is Olfactory receptor 5P59 (Mus musculus (Mouse)).